A 230-amino-acid polypeptide reads, in one-letter code: Urease accessory protein UreF (230 aa).

The protein belongs to the UreF family. UreD, UreF and UreG form a complex that acts as a GTP-hydrolysis-dependent molecular chaperone, activating the urease apoprotein by helping to assemble the nickel containing metallocenter of UreC. The UreE protein probably delivers the nickel.

It localises to the cytoplasm. Functionally, required for maturation of urease via the functional incorporation of the urease nickel metallocenter. The protein is Urease accessory protein UreF of Cupriavidus taiwanensis (strain DSM 17343 / BCRC 17206 / CCUG 44338 / CIP 107171 / LMG 19424 / R1) (Ralstonia taiwanensis (strain LMG 19424)).